A 180-amino-acid chain; its full sequence is Small ribosomal subunit protein uS4 (180 aa).

An S4 RNA-binding domain is found at 103-174 (RRLQTIVYKK…HPERMMIEKA (72 aa)).

The protein belongs to the universal ribosomal protein uS4 family. Part of the 30S ribosomal subunit. Contacts protein S5. The interaction surface between S4 and S5 is involved in control of translational fidelity.

Its function is as follows. One of the primary rRNA binding proteins, it binds directly to 16S rRNA where it nucleates assembly of the body of the 30S subunit. With S5 and S12 plays an important role in translational accuracy. The protein is Small ribosomal subunit protein uS4 of Pyrococcus horikoshii (strain ATCC 700860 / DSM 12428 / JCM 9974 / NBRC 100139 / OT-3).